The primary structure comprises 492 residues: MSDFSSSVKLKYVKLGYQYLINNFLTLLLIPVIATVAIELLRMGPEEILSVLNSLHFELLHILCSSFLIIFVSTVYFMSKPRTVYLVDYSCYKPPVTCRVPFSSFMEHSRLILKDNPKSVEFQMRILERSGLGEETCLPPAIHYIPPTPTMESARNEAQMVIFTAMEDLFKNTGLKPKDIDILIVNCSLFSPTPSLSAMIINKYKLRSNIKSYNLSGMGCSASLISVDVARDLLQVHPNSNAIIISTEIITPNYYKGNERAMLLPNCLFRMGGAAILLSNRRSDRWRAKYKLCHLVRTHRGADDKSYNCVMEQEDKNGNVGINLSKDLMTIAGEALKANITTIGPLVLPASEQLLFLSSLIGRKIFNPKWKPYIPDFKQAFEHFCIHAGGRAVIDELQKNLQLSGEHVEASRMTLHRFGNTSSSSLWYELSYIEAQGRMKRNDRVWQIAFGSGFKCNSAVWKCNRTIKTPTDGAWSDCIERYPVFIPEVVKL.

Helical transmembrane passes span 20-40 (LINN…AIEL) and 59-79 (LLHI…YFMS). The region spanning 76-365 (YFMSKPRTVY…FLSSLIGRKI (290 aa)) is the FAE domain. Residues C220, H299, H383, H387, H416, and N420 contribute to the active site.

The protein belongs to the thiolase-like superfamily. Chalcone/stilbene synthases family. In terms of tissue distribution, expressed in siliques, flowers, leaves and seedlings.

The protein localises to the membrane. It carries out the reaction a very-long-chain acyl-CoA + malonyl-CoA + H(+) = a very-long-chain 3-oxoacyl-CoA + CO2 + CoA. It participates in lipid metabolism; fatty acid biosynthesis. Its activity is regulated as follows. Inhibited by K3 herbicides such as alachlor, allidochlor, anilofos, cafenstrole and flufenacet. Strongly inhibited by metazachlor and mefluidide. Functionally, mediates mostly the synthesis of VLCFAs from 26 to 30 carbons in length (e.g. C20:1, C26, C28, C30). The protein is 3-ketoacyl-CoA synthase 5 of Arabidopsis thaliana (Mouse-ear cress).